The sequence spans 196 residues: SPRY domain-containing protein 7 (196 aa).

An N-acetylalanine modification is found at A2. The region spanning 2–184 is the B30.2/SPRY domain; sequence ATSVLCCLRC…FSEFYHTPPP (183 aa).

The chain is SPRY domain-containing protein 7 (SPRYD7) from Homo sapiens (Human).